We begin with the raw amino-acid sequence, 331 residues long: Lipoyl synthase (331 aa).

Residues 1–33 (MSDALIATSSEAPQSPAEQYDPTRKQKSADKTA) form a disordered region. Residues 7–17 (ATSSEAPQSPA) are compositionally biased toward polar residues. Positions 21 to 33 (DPTRKQKSADKTA) are enriched in basic and acidic residues. Residues Cys78, Cys83, Cys89, Cys104, Cys108, Cys111, and Ser318 each contribute to the [4Fe-4S] cluster site. Residues 89–307 (CFGKGTATFM…EEEAYKMGFT (219 aa)) form the Radical SAM core domain.

The protein belongs to the radical SAM superfamily. Lipoyl synthase family. The cofactor is [4Fe-4S] cluster.

The protein resides in the cytoplasm. The enzyme catalyses [[Fe-S] cluster scaffold protein carrying a second [4Fe-4S](2+) cluster] + N(6)-octanoyl-L-lysyl-[protein] + 2 oxidized [2Fe-2S]-[ferredoxin] + 2 S-adenosyl-L-methionine + 4 H(+) = [[Fe-S] cluster scaffold protein] + N(6)-[(R)-dihydrolipoyl]-L-lysyl-[protein] + 4 Fe(3+) + 2 hydrogen sulfide + 2 5'-deoxyadenosine + 2 L-methionine + 2 reduced [2Fe-2S]-[ferredoxin]. The protein operates within protein modification; protein lipoylation via endogenous pathway; protein N(6)-(lipoyl)lysine from octanoyl-[acyl-carrier-protein]: step 2/2. In terms of biological role, catalyzes the radical-mediated insertion of two sulfur atoms into the C-6 and C-8 positions of the octanoyl moiety bound to the lipoyl domains of lipoate-dependent enzymes, thereby converting the octanoylated domains into lipoylated derivatives. The sequence is that of Lipoyl synthase from Cupriavidus necator (strain ATCC 17699 / DSM 428 / KCTC 22496 / NCIMB 10442 / H16 / Stanier 337) (Ralstonia eutropha).